A 220-amino-acid chain; its full sequence is N-(5'-phosphoribosyl)anthranilate isomerase (220 aa).

This sequence belongs to the TrpF family.

The catalysed reaction is N-(5-phospho-beta-D-ribosyl)anthranilate = 1-(2-carboxyphenylamino)-1-deoxy-D-ribulose 5-phosphate. It functions in the pathway amino-acid biosynthesis; L-tryptophan biosynthesis; L-tryptophan from chorismate: step 3/5. The chain is N-(5'-phosphoribosyl)anthranilate isomerase from Xylella fastidiosa (strain M12).